Here is a 382-residue protein sequence, read N- to C-terminus: Mannitol-1-phosphate 5-dehydrogenase (382 aa).

3 to 14 is a binding site for NAD(+); the sequence is ALHFGAGNIGRG.

It belongs to the mannitol dehydrogenase family.

It carries out the reaction D-mannitol 1-phosphate + NAD(+) = beta-D-fructose 6-phosphate + NADH + H(+). The polypeptide is Mannitol-1-phosphate 5-dehydrogenase (Salmonella typhi).